The chain runs to 214 residues: 3-isopropylmalate dehydratase small subunit (214 aa).

This sequence belongs to the LeuD family. LeuD type 1 subfamily. As to quaternary structure, heterodimer of LeuC and LeuD.

The catalysed reaction is (2R,3S)-3-isopropylmalate = (2S)-2-isopropylmalate. It participates in amino-acid biosynthesis; L-leucine biosynthesis; L-leucine from 3-methyl-2-oxobutanoate: step 2/4. Catalyzes the isomerization between 2-isopropylmalate and 3-isopropylmalate, via the formation of 2-isopropylmaleate. This Alcanivorax borkumensis (strain ATCC 700651 / DSM 11573 / NCIMB 13689 / SK2) protein is 3-isopropylmalate dehydratase small subunit.